We begin with the raw amino-acid sequence, 331 residues long: MTSFITAVDNEEPTFNLTNSRLRLVSGTSNPKLAEEIASYLGIENVPLVSKRFADGELYVQIQQSIRGCDVFLIQPTCAPVNDSLMELMIMVDACKRASARQITAVIPYFGYARADRKTSGRESITAKLTANLLEKSGVDRVLAMDLHSAQIQGYFDIPCDHIYGSPVLIDYLESLKLEEVVVVSPDVGGVARARAFAKLMSDAPLAIIDKRRSAHNIAESLTVIGEVKGKTAILIDDMIDTGGTICSGANLLKKEGAKRIFACASHAVFSPPSYERLSSKDLFEQVIVTNSIPVIDNYEFPQLKVLSVANMLGEAIWRIHEESSVSSMFR.

An ATP-binding site is contributed by 55-57; it reads DGE. Residues histidine 148 and aspartate 187 each coordinate Mg(2+). Lysine 211 is an active-site residue. D-ribose 5-phosphate contacts are provided by residues arginine 213, aspartate 237, and 241–245; that span reads DTGGT.

This sequence belongs to the ribose-phosphate pyrophosphokinase family. Class I subfamily. As to quaternary structure, homohexamer. Requires Mg(2+) as cofactor.

The protein resides in the cytoplasm. The catalysed reaction is D-ribose 5-phosphate + ATP = 5-phospho-alpha-D-ribose 1-diphosphate + AMP + H(+). The protein operates within metabolic intermediate biosynthesis; 5-phospho-alpha-D-ribose 1-diphosphate biosynthesis; 5-phospho-alpha-D-ribose 1-diphosphate from D-ribose 5-phosphate (route I): step 1/1. Functionally, involved in the biosynthesis of the central metabolite phospho-alpha-D-ribosyl-1-pyrophosphate (PRPP) via the transfer of pyrophosphoryl group from ATP to 1-hydroxyl of ribose-5-phosphate (Rib-5-P). The sequence is that of Ribose-phosphate pyrophosphokinase from Prochlorococcus marinus subsp. pastoris (strain CCMP1986 / NIES-2087 / MED4).